The primary structure comprises 248 residues: NADP-dependent 3-hydroxy acid dehydrogenase YdfG (248 aa).

Residues Gly7–Phe12, Arg32–Arg33, Asp54–Val55, and Asn81 contribute to the NADP(+) site. Ser134 lines the substrate pocket. NADP(+) is bound by residues Tyr147, Lys151, and Pro177–Phe185. The active-site Proton acceptor is Tyr147.

This sequence belongs to the short-chain dehydrogenases/reductases (SDR) family. Homotetramer.

The catalysed reaction is 3-hydroxypropanoate + NADP(+) = 3-oxopropanoate + NADPH + H(+). The enzyme catalyses L-allo-threonine + NADP(+) = aminoacetone + CO2 + NADPH. Its function is as follows. NADP-dependent dehydrogenase with broad substrate specificity acting on 3-hydroxy acids. Catalyzes the NADP-dependent oxidation of L-allo-threonine to L-2-amino-3-keto-butyrate, which is spontaneously decarboxylated into aminoacetone. Also acts on D-threonine, L-serine, D-serine, D-3-hydroxyisobutyrate, L-3-hydroxyisobutyrate, D-glycerate and L-glycerate. Able to catalyze the reduction of the malonic semialdehyde to 3-hydroxypropionic acid. YdfG is apparently supplementing RutE, the presumed malonic semialdehyde reductase involved in pyrimidine degradation since both are able to detoxify malonic semialdehyde. The protein is NADP-dependent 3-hydroxy acid dehydrogenase YdfG of Escherichia coli O157:H7.